We begin with the raw amino-acid sequence, 940 residues long: UvrABC system protein A (940 aa).

Residue 31–38 (GLSGSGKS) coordinates ATP. The C4-type zinc-finger motif lies at 252–279 (CPQCGYSMQELEPRLFSFNNPAGACGTC). 2 consecutive ABC transporter domains span residues 309–586 (WDQK…PNSL) and 606–936 (RDPK…RFLK). ATP is bound at residue 639 to 646 (GVSGSGKS). The C4-type zinc finger occupies 739–765 (CEACQGDGVIKVEMHFLPDVYVPCDVC).

This sequence belongs to the ABC transporter superfamily. UvrA family. As to quaternary structure, forms a heterotetramer with UvrB during the search for lesions.

It is found in the cytoplasm. The UvrABC repair system catalyzes the recognition and processing of DNA lesions. UvrA is an ATPase and a DNA-binding protein. A damage recognition complex composed of 2 UvrA and 2 UvrB subunits scans DNA for abnormalities. When the presence of a lesion has been verified by UvrB, the UvrA molecules dissociate. The sequence is that of UvrABC system protein A from Vibrio parahaemolyticus serotype O3:K6 (strain RIMD 2210633).